A 496-amino-acid chain; its full sequence is Lysine--tRNA ligase (496 aa).

Mg(2+)-binding residues include Glu-409 and Glu-416.

Belongs to the class-II aminoacyl-tRNA synthetase family. In terms of assembly, homodimer. Mg(2+) is required as a cofactor.

It is found in the cytoplasm. It carries out the reaction tRNA(Lys) + L-lysine + ATP = L-lysyl-tRNA(Lys) + AMP + diphosphate. The sequence is that of Lysine--tRNA ligase from Streptococcus sanguinis (strain SK36).